The primary structure comprises 90 residues: Small ribosomal subunit protein bS20 (90 aa).

Belongs to the bacterial ribosomal protein bS20 family.

Binds directly to 16S ribosomal RNA. This chain is Small ribosomal subunit protein bS20, found in Rickettsia canadensis (strain McKiel).